Consider the following 421-residue polypeptide: ATP-dependent RNA helicase RhlB (421 aa).

The short motif at 9–37 (QKFSDFALHPQVVEALEKKGFYNCTPIQA) is the Q motif element. The Helicase ATP-binding domain occupies 40-219 (LPLTLAGRDV…FEQMNNAEYV (180 aa)). 53–60 (AQTGTGKT) lines the ATP pocket. A DEAD box motif is present at residues 165 to 168 (DEAD). In terms of domain architecture, Helicase C-terminal spans 245-390 (RLLQTLIEEE…VSKYNPEALM (146 aa)). Residues 396-421 (PLRLTRSRPGNGPRRAGAPRNRRRSG) form a disordered region. Residues 402-414 (SRPGNGPRRAGAP) show a composition bias toward low complexity.

It belongs to the DEAD box helicase family. RhlB subfamily. In terms of assembly, component of the RNA degradosome, which is a multiprotein complex involved in RNA processing and mRNA degradation.

It localises to the cytoplasm. The enzyme catalyses ATP + H2O = ADP + phosphate + H(+). In terms of biological role, DEAD-box RNA helicase involved in RNA degradation. Has RNA-dependent ATPase activity and unwinds double-stranded RNA. This Salmonella agona (strain SL483) protein is ATP-dependent RNA helicase RhlB.